Here is an 83-residue protein sequence, read N- to C-terminus: Neurotoxin-1'' (83 aa).

The first 19 residues, 1–19 (MNYLVMISLALLLMIGVES), serve as a signal peptide directing secretion. The 62-residue stretch at 21 to 82 (RDGYIVYPNN…PIKDTSRKCT (62 aa)) folds into the LCN-type CS-alpha/beta domain. 4 disulfide bridges follow: cysteine 31/cysteine 81, cysteine 35/cysteine 53, cysteine 39/cysteine 63, and cysteine 43/cysteine 65. Position 83 (arginine 83) is a propeptide, removed by a carboxypeptidase (in neurotoxin-1/1').

Belongs to the long (4 C-C) scorpion toxin superfamily. Sodium channel inhibitor family. Alpha subfamily. Expressed by the venom gland.

The protein localises to the secreted. Its function is as follows. Alpha toxins bind voltage-independently at site-3 of sodium channels (Nav) and inhibit the inactivation of the activated channels, thereby blocking neuronal transmission. Is active against mammals and binds with high affinity rat brain synaptosomes. The protein is Neurotoxin-1'' of Androctonus australis (Sahara scorpion).